We begin with the raw amino-acid sequence, 96 residues long: Large ribosomal subunit protein bL28 (96 aa).

A disordered region spans residues 1–23; that stretch reads MSRVCELSGKAPMTGNTVSHANN.

It belongs to the bacterial ribosomal protein bL28 family.

This chain is Large ribosomal subunit protein bL28, found in Cereibacter sphaeroides (strain ATCC 17029 / ATH 2.4.9) (Rhodobacter sphaeroides).